Here is a 360-residue protein sequence, read N- to C-terminus: Peptide chain release factor 1 (360 aa).

Gln237 is subject to N5-methylglutamine.

Belongs to the prokaryotic/mitochondrial release factor family. Methylated by PrmC. Methylation increases the termination efficiency of RF1.

The protein localises to the cytoplasm. Its function is as follows. Peptide chain release factor 1 directs the termination of translation in response to the peptide chain termination codons UAG and UAA. This is Peptide chain release factor 1 from Pseudomonas putida (strain ATCC 700007 / DSM 6899 / JCM 31910 / BCRC 17059 / LMG 24140 / F1).